Reading from the N-terminus, the 590-residue chain is G protein-coupled receptor kinase 5 (590 aa).

Residues 1 to 185 (MELENIVANT…LERQPVTKNT (185 aa)) are N-terminal. The interval 20–39 (GGKRKGKSKKWKEILKFPHI) is interaction with calmodulin. An RGS domain is found at 53-171 (YCSLCDKQPI…LDSMFFDRFL (119 aa)). The Protein kinase domain maps to 186–448 (FRQYRVLGKG…AAEVKRHPFF (263 aa)). Residues 192-200 (LGKGGFGEV) and lysine 215 each bind ATP. Aspartate 311 functions as the Proton acceptor in the catalytic mechanism. A Nuclear localization signal motif is present at residues 388 to 395 (RKEKVKRE). Positions 449 to 514 (RNMNFKRLEA…GSVSIPWQNE (66 aa)) constitute an AGC-kinase C-terminal domain. Residue serine 484 is modified to Phosphoserine; by autocatalysis. A Phosphothreonine; by autocatalysis modification is found at threonine 485. The tract at residues 531–590 (GTLPPDLNRNHPPEPPKKGLLQRLFKRQHQNNSKSSPSSKTSFNHHINSNHVSSNSTGSS) is disordered. The segment covering 538–547 (NRNHPPEPPK) has biased composition (basic and acidic residues). The segment at 546–565 (PKKGLLQRLFKRQHQNNSKS) is sufficient for membrane localization. The segment covering 563–590 (SKSSPSSKTSFNHHINSNHVSSNSTGSS) has biased composition (low complexity). Serine 579 carries the post-translational modification Phosphoserine.

The protein belongs to the protein kinase superfamily. AGC Ser/Thr protein kinase family. GPRK subfamily. Interacts with ST13 (via the C-terminus 303-319 AA). Interacts with TP53/p53. Interacts with HTR4 (via C-terminus 330-346 AA); this interaction is promoted by 5-HT (serotonin). Interacts with HDAC5. Interacts with GIT1. Post-translationally, autophosphorylated. Autophosphorylation may play a critical role in the regulation of GRK5 kinase activity. As to expression, highest levels in heart, placenta, lung &gt; skeletal muscle &gt; brain, liver, pancreas &gt; kidney.

It localises to the cytoplasm. The protein resides in the nucleus. Its subcellular location is the cell membrane. It carries out the reaction [G-protein-coupled receptor] + ATP = [G-protein-coupled receptor]-phosphate + ADP + H(+). With respect to regulation, inhibited by calmodulin with an IC(50) of 50 nM. Calmodulin inhibits GRK5 association with receptor and phospholipid. In terms of biological role, serine/threonine kinase that phosphorylates preferentially the activated forms of a variety of G-protein-coupled receptors (GPCRs). Such receptor phosphorylation initiates beta-arrestin-mediated receptor desensitization, internalization, and signaling events leading to their down-regulation. Phosphorylates a variety of GPCRs, including adrenergic receptors, muscarinic acetylcholine receptors (more specifically Gi-coupled M2/M4 subtypes), dopamine receptors and opioid receptors. In addition to GPCRs, also phosphorylates various substrates: Hsc70-interacting protein/ST13, TP53/p53, HDAC5, and arrestin-1/ARRB1. Phosphorylation of ARRB1 by GRK5 inhibits G-protein independent MAPK1/MAPK3 signaling downstream of 5HT4-receptors. Phosphorylation of HDAC5, a repressor of myocyte enhancer factor 2 (MEF2) leading to nuclear export of HDAC5 and allowing MEF2-mediated transcription. Phosphorylation of TP53/p53, a crucial tumor suppressor, inhibits TP53/p53-mediated apoptosis. Phosphorylation of ST13 regulates internalization of the chemokine receptor. Phosphorylates rhodopsin (RHO) (in vitro) and a non G-protein-coupled receptor, LRP6 during Wnt signaling (in vitro). This chain is G protein-coupled receptor kinase 5 (GRK5), found in Homo sapiens (Human).